A 263-amino-acid polypeptide reads, in one-letter code: Pollen allergen Phl p 1 (263 aa).

The N-terminal stretch at 1-23 (MASSSSVLLVVVLFAVFLGSAYG) is a signal peptide. Residue Asn-32 is glycosylated (N-linked (GlcNAc...) asparagine). Residues 61–167 (GGACGYKDVD…RRVKCKYPEG (107 aa)) form the Expansin-like EG45 domain. 3 disulfide bridges follow: Cys-64/Cys-92, Cys-95/Cys-162, and Cys-100/Cys-106. The 82-residue stretch at 181–262 (NYLALLVKYV…GWKADTSYES (82 aa)) folds into the Expansin-like CBD domain.

The protein belongs to the expansin family. Expansin B subfamily. In terms of assembly, homodimer.

It is found in the secreted. The chain is Pollen allergen Phl p 1 (PHLPI) from Phleum pratense (Common timothy).